The sequence spans 183 residues: UPF0398 protein LSL_0930 (183 aa).

This sequence belongs to the UPF0398 family.

This is UPF0398 protein LSL_0930 from Ligilactobacillus salivarius (strain UCC118) (Lactobacillus salivarius).